The chain runs to 98 residues: Small ribosomal subunit protein bS6 (98 aa).

The protein belongs to the bacterial ribosomal protein bS6 family.

Binds together with bS18 to 16S ribosomal RNA. This is Small ribosomal subunit protein bS6 from Levilactobacillus brevis (strain ATCC 367 / BCRC 12310 / CIP 105137 / JCM 1170 / LMG 11437 / NCIMB 947 / NCTC 947) (Lactobacillus brevis).